A 125-amino-acid polypeptide reads, in one-letter code: Holo-[acyl-carrier-protein] synthase (125 aa).

Mg(2+) contacts are provided by Asp-8 and Glu-57.

Belongs to the P-Pant transferase superfamily. AcpS family. Mg(2+) is required as a cofactor.

It is found in the cytoplasm. The enzyme catalyses apo-[ACP] + CoA = holo-[ACP] + adenosine 3',5'-bisphosphate + H(+). Its function is as follows. Transfers the 4'-phosphopantetheine moiety from coenzyme A to a Ser of acyl-carrier-protein. In Thermus thermophilus (strain ATCC BAA-163 / DSM 7039 / HB27), this protein is Holo-[acyl-carrier-protein] synthase.